We begin with the raw amino-acid sequence, 519 residues long: Histidine--tRNA ligase, cytoplasmic (519 aa).

L-histidine contacts are provided by residues D135–T137, R162, Q178, D182, R331, and Y335–Y336.

Belongs to the class-II aminoacyl-tRNA synthetase family. Homodimer.

The protein localises to the cytoplasm. The catalysed reaction is tRNA(His) + L-histidine + ATP = L-histidyl-tRNA(His) + AMP + diphosphate + H(+). Catalyzes the ATP-dependent ligation of histidine to the 3'-end of its cognate tRNA, via the formation of an aminoacyl-adenylate intermediate (His-AMP). Plays a role in axon guidance. This is Histidine--tRNA ligase, cytoplasmic (hars1) from Takifugu rubripes (Japanese pufferfish).